Here is a 535-residue protein sequence, read N- to C-terminus: CTP synthase (535 aa).

Residues 1-268 (MSTKYIFVTG…DQIVCDHLKL (268 aa)) form an amidoligase domain region. A CTP-binding site is contributed by Ser-14. A UTP-binding site is contributed by Ser-14. Residue 15–20 (SIGKGI) participates in ATP binding. Tyr-55 is an L-glutamine binding site. Asp-72 provides a ligand contact to ATP. Asp-72 and Glu-142 together coordinate Mg(2+). Residues 149-151 (DIE), 189-194 (KTKPTQ), and Lys-225 contribute to the CTP site. Residues 189-194 (KTKPTQ) and Lys-225 each bind UTP. Residues 293 to 535 (KISLVGKYVE…FVTAAVENSN (243 aa)) enclose the Glutamine amidotransferase type-1 domain. L-glutamine is bound at residue Gly-355. Cys-382 serves as the catalytic Nucleophile; for glutamine hydrolysis. L-glutamine contacts are provided by residues 383-386 (LGMQ), Glu-406, and Arg-464. Residues His-509 and Glu-511 contribute to the active site.

It belongs to the CTP synthase family. As to quaternary structure, homotetramer.

It catalyses the reaction UTP + L-glutamine + ATP + H2O = CTP + L-glutamate + ADP + phosphate + 2 H(+). The catalysed reaction is L-glutamine + H2O = L-glutamate + NH4(+). The enzyme catalyses UTP + NH4(+) + ATP = CTP + ADP + phosphate + 2 H(+). The protein operates within pyrimidine metabolism; CTP biosynthesis via de novo pathway; CTP from UDP: step 2/2. Allosterically activated by GTP, when glutamine is the substrate; GTP has no effect on the reaction when ammonia is the substrate. The allosteric effector GTP functions by stabilizing the protein conformation that binds the tetrahedral intermediate(s) formed during glutamine hydrolysis. Inhibited by the product CTP, via allosteric rather than competitive inhibition. Its function is as follows. Catalyzes the ATP-dependent amination of UTP to CTP with either L-glutamine or ammonia as the source of nitrogen. Regulates intracellular CTP levels through interactions with the four ribonucleotide triphosphates. The protein is CTP synthase of Streptococcus pneumoniae (strain ATCC BAA-255 / R6).